Here is a 168-residue protein sequence, read N- to C-terminus: Peptide deformylase 2 (168 aa).

Fe cation is bound by residues Cys91 and His133. Residue Glu134 is part of the active site. Position 137 (His137) interacts with Fe cation.

Belongs to the polypeptide deformylase family. Fe(2+) serves as cofactor.

It carries out the reaction N-terminal N-formyl-L-methionyl-[peptide] + H2O = N-terminal L-methionyl-[peptide] + formate. Removes the formyl group from the N-terminal Met of newly synthesized proteins. Requires at least a dipeptide for an efficient rate of reaction. N-terminal L-methionine is a prerequisite for activity but the enzyme has broad specificity at other positions. The sequence is that of Peptide deformylase 2 from Vibrio vulnificus (strain CMCP6).